A 2230-amino-acid polypeptide reads, in one-letter code: Genome polyprotein (2230 aa).

Residues 59–80 are disordered; that stretch reads TAEVGAHQTEPLKTSVDKPGSK. 2 consecutive short sequence motifs ((L)YPX(n)L motif) follow at residues 171–175 and 204–209; these read YPHGL and YPVWEL. Residues 770–840 are involved in P1-2A pentamerization; the sequence is MLDRIASGDL…PRKVKGLFSQ (71 aa). Residues 1015–1035 form a helical membrane-spanning segment; the sequence is TVEIINTVLCFVKSGILLYVI. A membrane-penetrating ability region spans residues 1047-1074; the sequence is IGLLQVMNYADIGCSVISCGKIFSKMLE. Positions 1131–1156 form a coiled coil; sequence KKKDVLNVLKENQHRIEKAIEEADQF. The region spanning 1208–1370 is the SF3 helicase domain; it reads HQKLKNLGSI…SFYKNAHNDM (163 aa). An ATP-binding site is contributed by 1234–1241; sequence GKRGGGKS. Residues 1466–1486 form a helical membrane-spanning segment; that stretch reads WVAIGAAVGVLGVLVGGWFVY. O-(5'-phospho-RNA)-tyrosine is present on Tyr1501. Residues 1516-1730 form the Peptidase C3 domain; sequence DPVDSQSTLE…VAKLVTQEMF (215 aa). Residues His1565, Asp1605, and Cys1693 each act as for protease 3C activity in the active site. The 122-residue stretch at 1979 to 2100 folds into the RdRp catalytic domain; the sequence is DVGLDLDFSS…VFSRNVQIDN (122 aa).

This sequence belongs to the picornaviridae polyprotein family. As to quaternary structure, homodimer. Homomultimer; probably interacts with membranes in a multimeric form. Seems to assemble into amyloid-like fibers. In terms of assembly, homodimer. Monomer. Interacts with protein 3CD. Interacts with host ACBD3. As to quaternary structure, interacts with protein 3AB. In terms of assembly, interacts with human MAVS. Homodimer; disulfide-linked. As to quaternary structure, homopentamer. Homooligomer. In terms of assembly, interacts with capsid protein VP2. Interacts with capsid protein VP3. Interacts with capsid protein VP1. Interacts with capsid protein VP3. As to quaternary structure, interacts with capsid protein VP1. Interacts with capsid protein VP2. Specific enzymatic cleavages by viral protease in vivo yield a variety of precursors and mature proteins. Polyprotein processing intermediates are produced, such as P1-2A which is a functional precursor of the structural proteins, VP0 which is a VP4-VP2 precursor, VP1-2A precursor, 3ABC precursor which is a stable and catalytically active precursor of 3A, 3B and 3C proteins, 3AB and 3CD precursors. The assembly signal 2A is removed from VP1-2A by a host protease, possibly host Cathepsin L. This cleavage occurs over a region of 3 amino-acids probably generating VP1 proteins with heterogeneous C-termini. Post-translationally, during virion maturation, immature virions are rendered infectious following cleavage of VP0 into VP4 and VP2. This maturation seems to be an autocatalytic event triggered by the presence of RNA in the capsid and is followed by a conformational change of the particle. In terms of processing, the assembly signal 2A is removed from VP1-2A by a host protease, possibly host Cathepsin L in naked virions. This cleavage does not occur in enveloped virions. This cleavage occurs over a region of 3 amino-acids probably generating VP1 proteins with heterogeneous C-termini. VPg is uridylylated prior to priming replication into VPg-pUpU. Post-translationally, unlike other picornaviruses, does not seem to be myristoylated.

Its subcellular location is the virion. The protein localises to the host endosome. It localises to the host multivesicular body. The protein resides in the host membrane. It is found in the host mitochondrion outer membrane. Its subcellular location is the host cytoplasm. The protein localises to the host cytoplasmic vesicle membrane. It carries out the reaction RNA(n) + a ribonucleoside 5'-triphosphate = RNA(n+1) + diphosphate. The enzyme catalyses a ribonucleoside 5'-triphosphate + H2O = a ribonucleoside 5'-diphosphate + phosphate + H(+). The catalysed reaction is Selective cleavage of Gln-|-Gly bond in the poliovirus polyprotein. In other picornavirus reactions Glu may be substituted for Gln, and Ser or Thr for Gly.. Capsid proteins VP1, VP2, and VP3 form a closed capsid enclosing the viral positive strand RNA genome. All these proteins contain a beta-sheet structure called beta-barrel jelly roll. Together they form an icosahedral capsid (T=3) composed of 60 copies of each VP1, VP2, and VP3, with a diameter of approximately 300 Angstroms. VP1 is situated at the 12 fivefold axes, whereas VP2 and VP3 are located at the quasi-sixfold axes. The naked capsid interacts with the host receptor HAVCR1 to provide virion attachment to and probably entry into the target cell. Functionally, VP0 precursor is a component of the immature procapsids. Its function is as follows. Plays a role in the assembly of the 12 pentamers into an icosahedral structure. Has not been detected in mature virions, supposedly owing to its small size. In terms of biological role, precursor component of immature procapsids that corresponds to an extended form of the structural protein VP1. After maturation, possibly by the host Cathepsin L, the assembly signal 2A is cleaved to give rise to the mature VP1 protein. Functions as a viroporin. Affects membrane integrity and causes an increase in membrane permeability. Involved in host intracellular membrane rearrangements probably to give rise to the viral factories. Does not disrupt calcium homeostasis or glycoprotein trafficking. Antagonizes the innate immune response of the host by suppressing IFN-beta synthesis, which it achieves by interfering with the RIG-I/IFIH1 pathway. Functionally, affects membrane integrity and causes an increase in membrane permeability. Its function is as follows. Associates with and induces structural rearrangements of intracellular membranes. Displays RNA-binding activity. In terms of biological role, the precursor 3ABC is targeted to the mitochondrial membrane where protease 3C activity cleaves and inhibits the host antiviral protein MAVS, thereby disrupting activation of IRF3 through the IFIH1/MDA5 pathway. In vivo, the protease activity of 3ABC precursor is more efficient in cleaving the 2BC precursor than that of protein 3C. The 3ABC precursor may therefore play a role in the proteolytic processing of the polyprotein. Possible viroporin. Interacts with the 3CD precursor and with RNA structures found at both the 5'- and 3'-termini of the viral genome. Since the 3AB precursor contains the hydrophobic domain 3A, it probably anchors the whole viral replicase complex to intracellular membranes on which viral RNA synthesis occurs. Functionally, may serve as membrane anchor to the 3AB and 3ABC precursors via its hydrophobic domain. May interact with RNA. Its function is as follows. Acts as a primer for viral RNA replication and remains covalently bound to viral genomic RNA. VPg is uridylylated prior to priming replication into VPg-pUpU. The VPg-pUpU is then used as primer on the genomic RNA poly(A) by the RNA-dependent RNA polymerase to replicate the viral genome. In terms of biological role, cysteine protease that generates mature viral proteins from the precursor polyprotein. In addition to its proteolytic activity, it binds to viral RNA, and thus influences viral genome replication. RNA and substrate bind cooperatively to the protease. Cleaves IKBKG/NEMO to impair innate immune signaling. Cleaves host PABPC1 which may participate in the switch of viral translation to RNA synthesis. Interacts with the 3AB precursor and with RNA structures found at both the 5'- and 3'-termini of the viral genome. Disrupts TLR3 signaling by degrading the host adapter protein TICAM1/TRIF. Functionally, RNA-directed RNA polymerase 3D-POL replicates genomic and antigenomic RNA by recognizing replications specific signals. This is Genome polyprotein from Callithrix (Owl-faced monkey).